The following is a 458-amino-acid chain: Phosphoglucosamine mutase (458 aa).

Catalysis depends on serine 108, which acts as the Phosphoserine intermediate. Residues serine 108, aspartate 247, aspartate 249, and aspartate 251 each contribute to the Mg(2+) site. At serine 108 the chain carries Phosphoserine.

It belongs to the phosphohexose mutase family. Requires Mg(2+) as cofactor. Post-translationally, activated by phosphorylation.

It carries out the reaction alpha-D-glucosamine 1-phosphate = D-glucosamine 6-phosphate. Functionally, catalyzes the conversion of glucosamine-6-phosphate to glucosamine-1-phosphate. This is Phosphoglucosamine mutase from Thiobacillus denitrificans (strain ATCC 25259 / T1).